A 401-amino-acid chain; its full sequence is Bifunctional sugar-1-phosphate nucleotidylyltransferase/acetyltransferase (401 aa).

A nucleotidylyltransferase region spans residues 1 to 220 (MKAFILAAGS…KPWNIIDVNK (220 aa)). Residues 8–13 (AGSGER), Gln-73, and Gly-79 each bind a ribonucleoside 5'-triphosphate. Positions 80, 97, 131, 146, and 157 each coordinate N-acetyl-alpha-D-glucosamine 1-phosphate. The acetyltransferase stretch occupies residues 236–401 (EDNVKIKGKV…DVGYGEFFKV (166 aa)).

The protein in the N-terminal section; belongs to the N-acetylglucosamine-1-phosphate uridyltransferase family. This sequence in the C-terminal section; belongs to the transferase hexapeptide repeat family. Homotrimer. The cofactor is Co(2+). Requires Mn(2+) as cofactor.

The enzyme catalyses dTTP + alpha-D-glucose 1-phosphate + H(+) = dTDP-alpha-D-glucose + diphosphate. The catalysed reaction is alpha-D-glucose 1-phosphate + UTP + H(+) = UDP-alpha-D-glucose + diphosphate. It carries out the reaction N-acetyl-alpha-D-galactosamine 1-phosphate + UTP + H(+) = UDP-N-acetyl-alpha-D-galactosamine + diphosphate. It catalyses the reaction N-acetyl-alpha-D-glucosamine 1-phosphate + UTP + H(+) = UDP-N-acetyl-alpha-D-glucosamine + diphosphate. The enzyme catalyses alpha-D-galactosamine 1-phosphate + acetyl-CoA = N-acetyl-alpha-D-galactosamine 1-phosphate + CoA + H(+). The catalysed reaction is alpha-D-glucosamine 1-phosphate + acetyl-CoA = N-acetyl-alpha-D-glucosamine 1-phosphate + CoA + H(+). It functions in the pathway nucleotide-sugar biosynthesis; UDP-N-acetyl-alpha-D-glucosamine biosynthesis; N-acetyl-alpha-D-glucosamine 1-phosphate from alpha-D-glucosamine 6-phosphate (route II): step 2/2. The protein operates within nucleotide-sugar biosynthesis; UDP-N-acetyl-alpha-D-glucosamine biosynthesis; UDP-N-acetyl-alpha-D-glucosamine from N-acetyl-alpha-D-glucosamine 1-phosphate: step 1/1. Its activity is regulated as follows. GlcN-1-P acetyltransferase activity is inhibited by divalent cations. GalN-1-P acetyltransferase activity is enhanced by Co(2+), Mg(2+) and Ca(2+), but inhibited by Zn(2+) or Mn(2+). Its function is as follows. Bifunctional enzyme involved in the synthesis of UDP-N-acetylglucosamine (UDP-GlcNAc) and UDP-N-acetylgalactosamine (UDP-GalNAc). It has multiple amino-sugar-1-phosphate acetyltransferase activities, including glucosamine-1-phosphate (GlcN-1-P) acetyltransferase and galactosamine-1-phosphate (GalN-1-P) acetyltransferase activities, and multiple sugar-1-phosphate nucleotidylyltransferase activities, including N-acetylglucosamine-1-phosphate (GlcNAc-1-P) uridyltransferase and N-acetylgalactosamine-1-phosphate (GalNAc-1-P) uridyltransferase activities. Also catalyzes the formation of dTDP-glucose from dTTP and glucose-1-phosphate (Glc-1-P), and the reverse reaction, which produces dTTP from dTDP-glucose and diphosphate. Can also catalyze the formation of UDP-glucose from UTP and glucose-1-phosphate. This is Bifunctional sugar-1-phosphate nucleotidylyltransferase/acetyltransferase from Sulfurisphaera tokodaii (strain DSM 16993 / JCM 10545 / NBRC 100140 / 7) (Sulfolobus tokodaii).